The sequence spans 732 residues: Exonuclease 1 (732 aa).

The N-domain stretch occupies residues 1–99; it reads MGITGLIPFV…KRRRDSRKQS (99 aa). Positions 30, 78, 150, 152, 171, 173, and 226 each coordinate Mg(2+). Residues 138–230 form an I-domain region; it reads RSRNVDCIVA…ILSGCDYLDS (93 aa). Disordered stretches follow at residues 422–471, 524–625, and 661–716; these read YSFK…QRSP, DEQT…TNST, and SCSS…VSQN. Phosphoserine is present on residues Ser431 and Ser433. The segment covering 432–442 has biased composition (basic and acidic residues); the sequence is PSREDSVDQER. Position 443 is a phosphothreonine (Thr443). Ser447 is subject to Phosphoserine. Basic and acidic residues-rich tracts occupy residues 457 to 467 and 525 to 537; these read FAKERTGEEAN and EQTR…LRDT. Composition is skewed to polar residues over residues 572–593 and 608–625; these read RCSS…SLLE and DLNN…TNST. The segment covering 661–677 has biased composition (low complexity); sequence SCSSDQRASSTSSSSQQ. Positions 703–716 are enriched in polar residues; sequence KSRTNGKLGAVSQN.

It belongs to the XPG/RAD2 endonuclease family. EXO1 subfamily. It depends on Mg(2+) as a cofactor. Specifically expressed in the female germline.

Its subcellular location is the nucleus. Functionally, 5'-&gt;3' double-stranded DNA exonuclease which may also contain a cryptic 3'-&gt;5' double-stranded DNA exonuclease activity. Also exhibits endonuclease activity against 5'-overhanging flap structures similar to those generated by displacement synthesis when DNA polymerase encounters the 5'-end of a downstream Okazaki fragment. Required for DNA mismatch repair (MMR). This chain is Exonuclease 1 (tos), found in Drosophila melanogaster (Fruit fly).